The chain runs to 142 residues: MQLTSFTDYGLRALIYMASLPEGKMTSITEVTQVYGVSRNHMVKIINQLSHMGFVEAIRGKNGGIRLGKPAADIIVGEVVRALEPLSLVNCSAEFCHITPACRLKLVLNQAIEQFLKELDRHTLAELVENNSPLYKLLLEDV.

Residues 2-129 form the HTH rrf2-type domain; sequence QLTSFTDYGL…DRHTLAELVE (128 aa). Residues 28-51 constitute a DNA-binding region (H-T-H motif); that stretch reads ITEVTQVYGVSRNHMVKIINQLSH. Cys-91, Cys-96, and Cys-102 together coordinate [2Fe-2S] cluster.

[2Fe-2S] cluster is required as a cofactor.

In terms of biological role, nitric oxide-sensitive repressor of genes involved in protecting the cell against nitrosative stress. May require iron for activity. The chain is HTH-type transcriptional repressor NsrR from Proteus mirabilis (strain HI4320).